Here is a 392-residue protein sequence, read N- to C-terminus: Xylose operon regulatory protein (392 aa).

The region spanning 288-386 is the HTH araC/xylS-type domain; it reads IQAMHYIRNH…DTTPKEYRDV (99 aa). DNA-binding regions (H-T-H motif) lie at residues 305–326 and 353–376; these read DQVL…KEEV and INEI…KKAY.

Its function is as follows. Regulatory protein for the xylBAFGHR operon. This chain is Xylose operon regulatory protein (xylR), found in Escherichia coli O157:H7.